Here is a 624-residue protein sequence, read N- to C-terminus: Iron transport multicopper oxidase FET3 (624 aa).

The signal sequence occupies residues 1–20 (MRTFLSSFIILTTFLASLIA). Topologically, residues 21–555 (AETHTWYFKT…KRLPTGFTTK (535 aa)) are extracellular. Plastocyanin-like domains follow at residues 46–144 (IGFN…FIIE) and 190–292 (NFLF…LQVN). Asn-49 and Asn-77 each carry an N-linked (GlcNAc...) asparagine glycan. Cu cation contacts are provided by His-81 and His-83. The N-linked (GlcNAc...) asparagine glycan is linked to Asn-113. 2 residues coordinate Cu cation: His-126 and His-128. Residues Asn-194, Asn-198, Asn-244, Asn-265, Asn-292, Asn-300, and Asn-359 are each glycosylated (N-linked (GlcNAc...) asparagine). Positions 382–499 (NELIYGTNTN…QGLAVVLIED (118 aa)) constitute a Plastocyanin-like 3 domain. Cu cation is bound by residues His-413, His-416, and His-418. N-linked (GlcNAc...) asparagine glycosylation is present at Asn-441. Positions 481, 482, 483, and 487 each coordinate Cu cation. A helical transmembrane segment spans residues 556–576 (GIVALVFSCVAAFLGLFSFSF). Topologically, residues 577–624 (YGMNDIAHVEDKVARDLDIDLEAENEDEEEAVVLNQNSSSSDSNSKPH) are cytoplasmic. The interval 603–624 (DEEEAVVLNQNSSSSDSNSKPH) is disordered. Over residues 608-624 (VVLNQNSSSSDSNSKPH) the composition is skewed to low complexity.

This sequence belongs to the multicopper oxidase family. Cu cation serves as cofactor.

The protein localises to the cell membrane. Iron transport multicopper ferroxidase required for Fe(2+) high affinity uptake. Required to oxidize Fe(2+) and release it from the transporter. Essential component of copper-dependent iron transport. The protein is Iron transport multicopper oxidase FET3 (FET3) of Candida albicans (Yeast).